We begin with the raw amino-acid sequence, 503 residues long: Cobyric acid synthase (503 aa).

Residues 245–447 (DISIAIIRLP…LHGIFDEISL (203 aa)) enclose the GATase cobBQ-type domain. Cysteine 326 acts as the Nucleophile in catalysis. Histidine 439 is an active-site residue.

This sequence belongs to the CobB/CobQ family. CobQ subfamily.

It functions in the pathway cofactor biosynthesis; adenosylcobalamin biosynthesis. Its function is as follows. Catalyzes amidations at positions B, D, E, and G on adenosylcobyrinic A,C-diamide. NH(2) groups are provided by glutamine, and one molecule of ATP is hydrogenolyzed for each amidation. The protein is Cobyric acid synthase of Alkaliphilus metalliredigens (strain QYMF).